Here is a 224-residue protein sequence, read N- to C-terminus: Uracil phosphoribosyltransferase (224 aa).

38-42 (KGLVK) contributes to the GTP binding site. Residues Arg-87, Arg-112, and 140 to 148 (DPMIATGST) each bind 5-phospho-alpha-D-ribose 1-diphosphate. Residues Ile-204 and 209–211 (GDA) each bind uracil. Asp-210 is a binding site for 5-phospho-alpha-D-ribose 1-diphosphate.

The protein belongs to the UPRTase family. Mg(2+) is required as a cofactor.

It catalyses the reaction UMP + diphosphate = 5-phospho-alpha-D-ribose 1-diphosphate + uracil. The protein operates within pyrimidine metabolism; UMP biosynthesis via salvage pathway; UMP from uracil: step 1/1. With respect to regulation, allosterically activated by GTP. In terms of biological role, catalyzes the conversion of uracil and 5-phospho-alpha-D-ribose 1-diphosphate (PRPP) to UMP and diphosphate. The polypeptide is Uracil phosphoribosyltransferase (Thermococcus gammatolerans (strain DSM 15229 / JCM 11827 / EJ3)).